Reading from the N-terminus, the 176-residue chain is Ribosome maturation factor RimM (176 aa).

In terms of domain architecture, PRC barrel spans 99–174 (KNEFYITDLI…IVLIQPEIWN (76 aa)).

The protein belongs to the RimM family. As to quaternary structure, binds ribosomal protein uS19.

The protein resides in the cytoplasm. Functionally, an accessory protein needed during the final step in the assembly of 30S ribosomal subunit, possibly for assembly of the head region. Essential for efficient processing of 16S rRNA. May be needed both before and after RbfA during the maturation of 16S rRNA. It has affinity for free ribosomal 30S subunits but not for 70S ribosomes. In Leptospira interrogans serogroup Icterohaemorrhagiae serovar copenhageni (strain Fiocruz L1-130), this protein is Ribosome maturation factor RimM.